Consider the following 475-residue polypeptide: UDP-glycosyltransferase 101 (475 aa).

The active-site Proton acceptor is H15. H15 serves as a coordination point for an anthocyanidin. The active-site Charge relay is D117. UDP-alpha-D-glucose-binding residues include A345, Q347, H362, W365, N366, S367, and E370. G385 provides a ligand contact to an anthocyanidin. Positions 386 and 387 each coordinate UDP-alpha-D-glucose.

The protein belongs to the UDP-glycosyltransferase family.

It carries out the reaction (20S)-protopanaxadiol + UDP-alpha-D-glucose = (20S)-ginsenoside C-K + UDP + H(+). The catalysed reaction is (20S)-ginsenoside Rg3 + UDP-alpha-D-glucose = (20S)-ginsenoside Rd + UDP + H(+). The enzyme catalyses (20S)-protopanaxatriol + UDP-alpha-D-glucose = (20S)-ginsenoside F1 + UDP + H(+). It catalyses the reaction (20S)-ginsenoside F1 + UDP-alpha-D-glucose = (20S)-ginsenoside Rg1 + UDP + H(+). It functions in the pathway secondary metabolite biosynthesis; terpenoid biosynthesis. In terms of biological role, component of the dammarane-type triterpene saponins (e.g. ginsenosides or panaxosides) biosynthetic pathway. Glycosyltransferase that catalyzes the biosynthesis of ginsenoside F1 from protopanaxatriol (PPT) and the conversion of ginsenoside F1 to ginsenoside Rg1. Triggers C20-OH glycosylation of ginsenoside Rg3 to produce ginsenoside Rd. Mediates the conversion of protopanaxadiol (PPD) to the ginsenoside compound K. In Panax ginseng (Korean ginseng), this protein is UDP-glycosyltransferase 101.